An 871-amino-acid chain; its full sequence is MSKATKYDPKKVERQFYQIWETRGYFETDGNKKIQNGKTFCIMMPPPNVTGRLHIGHALTFTLQDIMVRYKRMDGYETLWQPGTDHAGIATQNVVEKQLLSKGIKKEEIGREKFLEYVWKWKEESGNAIVTQLRLLGVSPAWSRERFTMDKGLKNAVREAFVNLYYEGLIVKGNYMINWCTHDGALSDIEVEYEEKEGALYHIKYPIVGSDEYLVVATTRPETYFGDTAVMVNPNDERYKHLIGKKVRLPLINREIPIIADEHVDMEFGTGAVKVTPAHDPNDYEVGKRHNLPFITIFDENGILNEEAGEFAGIERLEARKKVVEKLEQEGFIEKIEPHKHQVGHCYRCGNVVEPYISPQWFVKAEIAKEAVKKANEGETKFYPPQWLNNFNAWMRELRDWCISRQLWWGHRIPVWYCRACGHEWASKKEHEESCPKCGSTDIYQDPDVLDTWFSSALWPFSTLGWGNGDWGKGVKWFEDDLKKFYPNDLLITGFDILFFWVARMMMMGEHFLHKLPFKDVYLHALVRDEHGQKMSKSRGNVIDPIDTIEEYSADALRFTLAALAVQGRDIRLSKERLELYRNFTNKLYNAARFLQIHQEKFDDLQNIQIKTDLGKYILSRFGLAIQEVRNNLNSYRFNDAATTLYRFLWGEFCDWGIELSKVNKDAIAELGAIFKESMKLLHPFMPFITEFLYQELSGTSIEENESIMIQPYPKAAPIDEEIMKRFETIIDAIVSIRRAKALIDMANKTIPKVLIKGDLEESAKAYISKLAKVETIEFVSEPAENAVTDIGNYVEVFIPLEGIDLTPILNRLNKQKEKLQKEIDKLSRMLSNENFVKNAPQAVVEQNRAALAEAQNRLATIEEELARLTR.

The short motif at 47–57 (PNVTGRLHIGH) is the 'HIGH' region element. The short motif at 534–538 (KMSKS) is the 'KMSKS' region element. Lys537 contributes to the ATP binding site. Residues 805-871 (DLTPILNRLN…IEEELARLTR (67 aa)) are a coiled coil.

This sequence belongs to the class-I aminoacyl-tRNA synthetase family. ValS type 1 subfamily. In terms of assembly, monomer.

It localises to the cytoplasm. It carries out the reaction tRNA(Val) + L-valine + ATP = L-valyl-tRNA(Val) + AMP + diphosphate. In terms of biological role, catalyzes the attachment of valine to tRNA(Val). As ValRS can inadvertently accommodate and process structurally similar amino acids such as threonine, to avoid such errors, it has a 'posttransfer' editing activity that hydrolyzes mischarged Thr-tRNA(Val) in a tRNA-dependent manner. The protein is Valine--tRNA ligase of Nitratiruptor sp. (strain SB155-2).